The following is a 419-amino-acid chain: Tyrosine--tRNA ligase 2 (419 aa).

Residue Y34 participates in L-tyrosine binding. The short motif at 39-48 is the 'HIGH' region element; that stretch reads PTGDSMHIGH. Positions 168 and 172 each coordinate L-tyrosine. The 'KMSKS' region motif lies at 230 to 234; the sequence is KFGKS. K233 is a binding site for ATP. An S4 RNA-binding domain is found at 352-418; sequence KNIVEWLVDL…GKKNYSLVKL (67 aa).

It belongs to the class-I aminoacyl-tRNA synthetase family. TyrS type 1 subfamily. In terms of assembly, homodimer.

It localises to the cytoplasm. It carries out the reaction tRNA(Tyr) + L-tyrosine + ATP = L-tyrosyl-tRNA(Tyr) + AMP + diphosphate + H(+). Catalyzes the attachment of tyrosine to tRNA(Tyr) in a two-step reaction: tyrosine is first activated by ATP to form Tyr-AMP and then transferred to the acceptor end of tRNA(Tyr). The sequence is that of Tyrosine--tRNA ligase 2 from Bacillus cereus (strain ATCC 10987 / NRS 248).